Reading from the N-terminus, the 279-residue chain is NADPH-dependent 7-cyano-7-deazaguanine reductase (279 aa).

86–88 (IES) contacts substrate. 88 to 89 (SK) is an NADPH binding site. Catalysis depends on Cys187, which acts as the Thioimide intermediate. Residue Asp194 is the Proton donor of the active site. 226–227 (HE) contributes to the substrate binding site. 255–256 (RG) serves as a coordination point for NADPH.

This sequence belongs to the GTP cyclohydrolase I family. QueF type 2 subfamily. Homodimer.

Its subcellular location is the cytoplasm. The catalysed reaction is 7-aminomethyl-7-carbaguanine + 2 NADP(+) = 7-cyano-7-deazaguanine + 2 NADPH + 3 H(+). The protein operates within tRNA modification; tRNA-queuosine biosynthesis. Catalyzes the NADPH-dependent reduction of 7-cyano-7-deazaguanine (preQ0) to 7-aminomethyl-7-deazaguanine (preQ1). This Haemophilus influenzae (strain PittGG) protein is NADPH-dependent 7-cyano-7-deazaguanine reductase.